A 62-amino-acid polypeptide reads, in one-letter code: Large ribosomal subunit protein bL28 (62 aa).

This sequence belongs to the bacterial ribosomal protein bL28 family.

In Thermobifida fusca (strain YX), this protein is Large ribosomal subunit protein bL28.